We begin with the raw amino-acid sequence, 739 residues long: Phosphoribosylformylglycinamidine synthase subunit PurL (739 aa).

Residue histidine 49 is part of the active site. ATP contacts are provided by tyrosine 52 and lysine 91. A Mg(2+)-binding site is contributed by glutamate 93. Substrate contacts are provided by residues 94-97 and arginine 116; that span reads SHNH. Histidine 95 acts as the Proton acceptor in catalysis. A Mg(2+)-binding site is contributed by aspartate 117. Substrate is bound at residue glutamine 240. A Mg(2+)-binding site is contributed by aspartate 268. Position 312–314 (312–314) interacts with substrate; that stretch reads ESQ. The ATP site is built by aspartate 493 and glycine 530. Position 531 (asparagine 531) interacts with Mg(2+). Serine 533 provides a ligand contact to substrate.

It belongs to the FGAMS family. Monomer. Part of the FGAM synthase complex composed of 1 PurL, 1 PurQ and 2 PurS subunits.

The protein resides in the cytoplasm. The catalysed reaction is N(2)-formyl-N(1)-(5-phospho-beta-D-ribosyl)glycinamide + L-glutamine + ATP + H2O = 2-formamido-N(1)-(5-O-phospho-beta-D-ribosyl)acetamidine + L-glutamate + ADP + phosphate + H(+). The protein operates within purine metabolism; IMP biosynthesis via de novo pathway; 5-amino-1-(5-phospho-D-ribosyl)imidazole from N(2)-formyl-N(1)-(5-phospho-D-ribosyl)glycinamide: step 1/2. In terms of biological role, part of the phosphoribosylformylglycinamidine synthase complex involved in the purines biosynthetic pathway. Catalyzes the ATP-dependent conversion of formylglycinamide ribonucleotide (FGAR) and glutamine to yield formylglycinamidine ribonucleotide (FGAM) and glutamate. The FGAM synthase complex is composed of three subunits. PurQ produces an ammonia molecule by converting glutamine to glutamate. PurL transfers the ammonia molecule to FGAR to form FGAM in an ATP-dependent manner. PurS interacts with PurQ and PurL and is thought to assist in the transfer of the ammonia molecule from PurQ to PurL. This is Phosphoribosylformylglycinamidine synthase subunit PurL from Parvibaculum lavamentivorans (strain DS-1 / DSM 13023 / NCIMB 13966).